A 303-amino-acid chain; its full sequence is Acetylglutamate kinase (303 aa).

Residues 67–68 (GG), R89, and N193 contribute to the substrate site.

It belongs to the acetylglutamate kinase family. ArgB subfamily.

It localises to the cytoplasm. The catalysed reaction is N-acetyl-L-glutamate + ATP = N-acetyl-L-glutamyl 5-phosphate + ADP. It participates in amino-acid biosynthesis; L-arginine biosynthesis; N(2)-acetyl-L-ornithine from L-glutamate: step 2/4. In terms of biological role, catalyzes the ATP-dependent phosphorylation of N-acetyl-L-glutamate. In Acinetobacter baylyi (strain ATCC 33305 / BD413 / ADP1), this protein is Acetylglutamate kinase.